Consider the following 162-residue polypeptide: NADH-quinone oxidoreductase subunit I (162 aa).

4Fe-4S ferredoxin-type domains lie at 53–83 (QRRY…IESE) and 93–122 (SRYD…ETHI). Residues Cys63, Cys66, Cys69, Cys73, Cys102, Cys105, Cys108, and Cys112 each contribute to the [4Fe-4S] cluster site.

This sequence belongs to the complex I 23 kDa subunit family. As to quaternary structure, NDH-1 is composed of 14 different subunits. Subunits NuoA, H, J, K, L, M, N constitute the membrane sector of the complex. Requires [4Fe-4S] cluster as cofactor.

It is found in the cell inner membrane. It carries out the reaction a quinone + NADH + 5 H(+)(in) = a quinol + NAD(+) + 4 H(+)(out). In terms of biological role, NDH-1 shuttles electrons from NADH, via FMN and iron-sulfur (Fe-S) centers, to quinones in the respiratory chain. The immediate electron acceptor for the enzyme in this species is believed to be ubiquinone. Couples the redox reaction to proton translocation (for every two electrons transferred, four hydrogen ions are translocated across the cytoplasmic membrane), and thus conserves the redox energy in a proton gradient. The protein is NADH-quinone oxidoreductase subunit I of Chromobacterium violaceum (strain ATCC 12472 / DSM 30191 / JCM 1249 / CCUG 213 / NBRC 12614 / NCIMB 9131 / NCTC 9757 / MK).